We begin with the raw amino-acid sequence, 259 residues long: ATP synthase subunit a (259 aa).

5 consecutive transmembrane segments (helical) span residues 29-49 (TVNIDSMVFSVVLGTLFIWLF), 89-109 (LIAPLALTIFVWIFLMNAMDL), 132-154 (SADVNITLSMALGVFFLILFYSI), 209-229 (IFILIAAMLPWWSQWFLNVPW), and 230-250 (AIFHILIITLQAFIFMVLTIV).

The protein belongs to the ATPase A chain family. In terms of assembly, F-type ATPases have 2 components, CF(1) - the catalytic core - and CF(0) - the membrane proton channel. CF(1) has five subunits: alpha(3), beta(3), gamma(1), delta(1), epsilon(1). CF(0) has three main subunits: a(1), b(2) and c(9-12). The alpha and beta chains form an alternating ring which encloses part of the gamma chain. CF(1) is attached to CF(0) by a central stalk formed by the gamma and epsilon chains, while a peripheral stalk is formed by the delta and b chains.

The protein resides in the cell inner membrane. Key component of the proton channel; it plays a direct role in the translocation of protons across the membrane. This Tolumonas auensis (strain DSM 9187 / NBRC 110442 / TA 4) protein is ATP synthase subunit a.